The primary structure comprises 119 residues: Dolichyl-diphosphooligosaccharide--protein glycosyltransferase subunit DAD1 (119 aa).

S2 is modified (N-acetylserine). Residues 2–30 (SASVASVISRFLEEYLSSTPQRLKLLDAY) are Cytoplasmic-facing. Residues 31-51 (LLYILLTGALQFGYCLLVGTF) form a helical membrane-spanning segment. Topologically, residues 52-54 (PFN) are lumenal. The helical transmembrane segment at 55–75 (SFLSGFISCVGSFILAGNGSL) threads the bilayer. The Cytoplasmic segment spans residues 76-81 (RNRSNN). The chain crosses the membrane as a helical span at residues 82–98 (VFTLVRCFSSLVTLFYS). The Lumenal portion of the chain corresponds to 99–119 (RSPPREVPRGACIALFCERGN).

It belongs to the DAD/OST2 family. In terms of assembly, component of the oligosaccharyltransferase (OST) complex. OST exists in two different complex forms which contain common core subunits RPN1, RPN2, OST48, OST4, DAD1 and TMEM258, either STT3A or STT3B as catalytic subunits, and form-specific accessory subunits. STT3A complex assembly occurs through the formation of 3 subcomplexes. Subcomplex 1 contains RPN1 and TMEM258, subcomplex 2 contains the STT3A-specific subunits STT3A, DC2/OSTC, and KCP2 as well as the core subunit OST4, and subcomplex 3 contains RPN2, DAD1, and OST48. The STT3A complex can form stable complexes with the Sec61 complex or with both the Sec61 and TRAP complexes.

It localises to the endoplasmic reticulum membrane. The protein operates within protein modification; protein glycosylation. Its function is as follows. Subunit of the oligosaccharyl transferase (OST) complex that catalyzes the initial transfer of a defined glycan (Glc(3)Man(9)GlcNAc(2) in eukaryotes) from the lipid carrier dolichol-pyrophosphate to an asparagine residue within an Asn-X-Ser/Thr consensus motif in nascent polypeptide chains, the first step in protein N-glycosylation. N-glycosylation occurs cotranslationally and the complex associates with the Sec61 complex at the channel-forming translocon complex that mediates protein translocation across the endoplasmic reticulum (ER). All subunits are required for a maximal enzyme activity. The sequence is that of Dolichyl-diphosphooligosaccharide--protein glycosyltransferase subunit DAD1 from Canis lupus familiaris (Dog).